The sequence spans 257 residues: Small ribosomal subunit protein eS1 (257 aa).

A disordered region spans residues 236–257; sequence TSAEGEKIERPDDYEPPVQESV. A compositionally biased stretch (basic and acidic residues) spans 239–248; that stretch reads EGEKIERPDD.

Belongs to the eukaryotic ribosomal protein eS1 family. In terms of assembly, component of the small ribosomal subunit. Mature ribosomes consist of a small (40S) and a large (60S) subunit. The 40S subunit contains about 33 different proteins and 1 molecule of RNA (18S). The 60S subunit contains about 49 different proteins and 3 molecules of RNA (28S, 5.8S and 5S).

The protein localises to the cytoplasm. This chain is Small ribosomal subunit protein eS1, found in Brugia malayi (Filarial nematode worm).